The following is a 927-amino-acid chain: Probable UDP-N-acetylglucosamine--peptide N-acetylglucosaminyltransferase SPINDLY (927 aa).

The tract at residues 1-31 (MGRPGMDSSEGRESNGVVPERNGGAVPAKQQ) is disordered. 11 TPR repeats span residues 34–67 (GKDTLRYANILRSRNKFAEALQLYNNVLEKDEAN), 68–101 (VEALIGKGICLQAQSLPMQAIECFNEAVRIDPGN), 102–135 (ACALTYCGMIYKDEGHLVEAAEAYQKARNADPSY), 143–176 (AIVLTDLGTSLKLAGNTEEGIQKYCEALEVDSHY), 177–210 (APAYYNLGVVYSEMMQFDLALTCYEKAALERPLY), 211–244 (AEAYCNMGVIYKNRGELEAAIACYERCLTISPNF), 252–285 (AIALTDLGTKVKIEGDINQGVAYYKKALFYNWHY), 286–319 (ADAMYNLGVAYGEMLNFEMAIVFYELALHFNPRC), 320–353 (AEACNNLGVIYKDRDNLDKAVECYQMALSIKPNF), 355–387 (QSLNNLGVVYTVQGKMDAASSMIQKAIFANSTY), and 388–421 (AEAYNNLGVLYRDAGSITSAVQAYEKCLQIDPDS). The catalytic region stretch occupies residues 422 to 927 (RNAGQNRLLA…KVEANGHISR (506 aa)).

This sequence belongs to the glycosyltransferase 41 family. O-GlcNAc transferase subfamily.

Its subcellular location is the nucleus. The catalysed reaction is L-seryl-[protein] + UDP-N-acetyl-alpha-D-glucosamine = 3-O-(N-acetyl-beta-D-glucosaminyl)-L-seryl-[protein] + UDP + H(+). It catalyses the reaction L-threonyl-[protein] + UDP-N-acetyl-alpha-D-glucosamine = 3-O-(N-acetyl-beta-D-glucosaminyl)-L-threonyl-[protein] + UDP + H(+). It participates in protein modification; protein glycosylation. In terms of biological role, probable O-linked N-acetylglucosamine transferase (OGT) involved in various processes such as gibberellin (GA) signaling pathway. OGTs catalyze the addition of nucleotide-activated sugars directly onto the polypeptide through O-glycosidic linkage with the hydroxyl of serine or threonine. Probably acts by adding O-linked sugars to yet unknown proteins. The chain is Probable UDP-N-acetylglucosamine--peptide N-acetylglucosaminyltransferase SPINDLY (SPY) from Oryza sativa subsp. japonica (Rice).